Reading from the N-terminus, the 96-residue chain is Putative septation protein SpoVG (96 aa).

The protein belongs to the SpoVG family.

Could be involved in septation. The sequence is that of Putative septation protein SpoVG from Phytoplasma australiense.